The primary structure comprises 258 residues: MSKRNAVTTFFTNRVTKALGMTLALMMTCQSAMASLAVDQTRYIFRGDKDALTITVTNNDKERTFGGQAWVDNIVEKDTRPTFVVTPSFFKVKPNGQQTLRIIMASDHLPKDKESVYWLNLQDIPPALEGSGIAVALRTKLKLFYRPKALLEGRKGAEEGISLQSRPDGRTMLVNTTPYIFAIGSLLDGNGKKIATDNGTTQKLLMFMPGDEVQVKGNVVKVDSLNDYGELQTWTINKKKPAAPEAAKAEKADTAEQK.

Positions 1-34 are cleaved as a signal peptide; the sequence is MSKRNAVTTFFTNRVTKALGMTLALMMTCQSAMA. Positions 239–258 are disordered; sequence KKPAAPEAAKAEKADTAEQK. The span at 247–258 shows a compositional bias: basic and acidic residues; that stretch reads AKAEKADTAEQK.

The protein belongs to the periplasmic pilus chaperone family.

It is found in the periplasm. Its function is as follows. Mediates assembly of pili by forming soluble multimeric complexes with pili subunits as an intermediate step in the assembly process. This protein is involved in K88 pili assembly. Protects pilin protein from proteolytic degradation by DegP and from premature polymerization. This is Chaperone protein FaeE (faeE) from Escherichia coli.